Consider the following 215-residue polypeptide: Cytochrome b6 (215 aa).

The helical transmembrane segment at 32–52 threads the bilayer; sequence IFYCLGGIVFVSFLIQVATGF. Cys-35 lines the heme c pocket. Residues His-86 and His-100 each coordinate heme b. Helical transmembrane passes span 90-110, 116-136, and 186-206; these read VSMM…TGGF, LTWV…VTGY, and LHTF…FLMI. Heme b is bound by residues His-187 and His-202.

This sequence belongs to the cytochrome b family. PetB subfamily. As to quaternary structure, the 4 large subunits of the cytochrome b6-f complex are cytochrome b6, subunit IV (17 kDa polypeptide, PetD), cytochrome f and the Rieske protein, while the 4 small subunits are PetG, PetL, PetM and PetN. The complex functions as a dimer. It depends on heme b as a cofactor. Requires heme c as cofactor.

Its subcellular location is the plastid. The protein resides in the chloroplast thylakoid membrane. Component of the cytochrome b6-f complex, which mediates electron transfer between photosystem II (PSII) and photosystem I (PSI), cyclic electron flow around PSI, and state transitions. This Pyropia yezoensis (Susabi-nori) protein is Cytochrome b6.